Reading from the N-terminus, the 758-residue chain is MTSGPFFFCVFIIGRYFTLGNAQDVSCPLGSFPCGNISKCLPQLLHCNGVDDCGNQADEDNCGDNNGWSLQLDKYFANYYKLTSTNSIEAETSECLVGSVPMHCLCRDLELDCDEANLRAVPSVSSNVTVMSLQWNFIRTLPPNSFRKYHDLQKLCLQNNKIRSVSVSAFRGLHSLTKLYLSHNRITFLKPGVFEDLHRLEWLIIEDNHLSRISPLTFYGLNSLILLVLMNNALTRLPDKPLCQHMPRLHWLDFEGNRIHNLRNLTFISCNNLTVLVMRKNKINHLNEHAFTHLQKLDELDLGSNKIENLPPNIFKDLKELSQLNISYNPIQKIEVNQFDYLAKLKSLSLEGIEISNIQQRMFRPLINLSHIYFKKFQYCGYAPHVRSCKPNTDGISSLENLLASIIQRVFVWVVSAITCFGNIFVICMRPYIRSENKLHAMSIMSLCCADCLMGVYLFVIGAFDLKFRGEYRKHAQPWMESVHCQFMGSLAVLSTEVSVLLLTFLTLEKYICIVYPFRCLRPRKCRTVAVLIFIWITGFIVAFAPLGNKEFFKNYYGTNGVCFPLHSEDTGSTGAQIYSVVIFLGINLVAFIIIVFSYGSMFYSVHQSTITATEIQKQVKKEMILAKRFFFIVFTDALCWIPIFILKFLSLIRVEIPDTITSWVVIFILPINSALNPIIYTLTTRPFKEMIHQLWYNYRQRRSVDRKGTQKAYTPSFIWVEMWPLQEMSTEFMKPDAFTDPCDLSLVSRSSRLNSYS.

Residues 1-408 (MTSGPFFFCV…LENLLASIIQ (408 aa)) lie on the Extracellular side of the membrane. The region spanning 26–63 (SCPLGSFPCGNISKCLPQLLHCNGVDDCGNQADEDNCG) is the LDL-receptor class A domain. Disulfide bonds link Cys-27–Cys-40, Cys-34–Cys-53, and Cys-47–Cys-62. Residue Asn-36 is glycosylated (N-linked (GlcNAc...) asparagine). Positions 45, 48, 50, 52, 58, and 59 each coordinate Ca(2+). 11 LRR repeats span residues 105–125 (LCRD…PSVS), 126–148 (SNVT…SFRK), 149–172 (YHDL…AFRG), 173–196 (LHSL…VFED), 198–220 (HRLE…TFYG), 221–244 (LNSL…PLCQ), 246–269 (MPRL…TFIS), 270–293 (CNNL…AFTH), 294–317 (LQKL…IFKD), 319–341 (KELS…QFDY), and 342–365 (LAKL…MFRP). N-linked (GlcNAc...) asparagine glycosylation is present at Asn-127. Asn-264 and Asn-272 each carry an N-linked (GlcNAc...) asparagine glycan. Asn-325 carries N-linked (GlcNAc...) asparagine glycosylation. Asn-368 carries an N-linked (GlcNAc...) asparagine glycan. Residues 409–429 (RVFVWVVSAITCFGNIFVICM) traverse the membrane as a helical segment. At 430-443 (RPYIRSENKLHAMS) the chain is on the cytoplasmic side. The chain crosses the membrane as a helical span at residues 444 to 464 (IMSLCCADCLMGVYLFVIGAF). Residues 465-486 (DLKFRGEYRKHAQPWMESVHCQ) are Extracellular-facing. Cys-485 and Cys-563 form a disulfide bridge. A helical transmembrane segment spans residues 487–507 (FMGSLAVLSTEVSVLLLTFLT). Residues 508 to 527 (LEKYICIVYPFRCLRPRKCR) are Cytoplasmic-facing. The chain crosses the membrane as a helical span at residues 528–548 (TVAVLIFIWITGFIVAFAPLG). Residues 549–577 (NKEFFKNYYGTNGVCFPLHSEDTGSTGAQ) are Extracellular-facing. A helical membrane pass occupies residues 578 to 598 (IYSVVIFLGINLVAFIIIVFS). Residues 599-629 (YGSMFYSVHQSTITATEIQKQVKKEMILAKR) lie on the Cytoplasmic side of the membrane. The helical transmembrane segment at 630–650 (FFFIVFTDALCWIPIFILKFL) threads the bilayer. Over 651-660 (SLIRVEIPDT) the chain is Extracellular. Residues 661-681 (ITSWVVIFILPINSALNPIIY) form a helical membrane-spanning segment. At 682–758 (TLTTRPFKEM…SRSSRLNSYS (77 aa)) the chain is on the cytoplasmic side.

It belongs to the G-protein coupled receptor 1 family. As to quaternary structure, interacts with C1QTNF8. In terms of tissue distribution, detected in brain cortex, and at low levels in testis.

It localises to the cell membrane. Functionally, receptor for relaxins. The activity of this receptor is mediated by G proteins leading to stimulation of adenylate cyclase and an increase of cAMP. Binding of the ligand may also activate a tyrosine kinase pathway that inhibits the activity of a phosphodiesterase that degrades cAMP. The protein is Relaxin receptor 1 (Rxfp1) of Rattus norvegicus (Rat).